Reading from the N-terminus, the 424-residue chain is Spermatogenesis-associated protein 2-like protein (424 aa).

2 disordered regions span residues Glu233–Ala258 and Thr273–Leu300. Ser327 carries the post-translational modification Phosphoserine.

It belongs to the SPATA2 family.

This chain is Spermatogenesis-associated protein 2-like protein, found in Homo sapiens (Human).